The following is a 328-amino-acid chain: MEIVWEVLFLLQANFIVCISAQQNSPKIHEGWWAYKEVVQGSFVPVPSFWGLVNSAWNLCSVGKRQSPVNIETSHMIFDPFLTPLRINTGGRKVSGTMYNTGRHVSLRLDKEHLVNISGGPMTYSHRLEEIRLHFGSEDSQGSEHLLNGQAFSGEVQLIHYNHELYTNVTEAAKSPNGLVVVSIFIKVSDSSNPFLNRMLNRDTITRITYKNDAYLLQGLNIEELYPETSSFITYDGSMTIPPCYETASWIIMNKPVYITRMQMHSLRLLSQNQPSQIFLSMSDNFRPVQPLNNRCIRTNINFSLQGKDCPNNRAQKLQYRVNEWLLK.

The Alpha-carbonic anhydrase domain maps to 31 to 301; sequence GWWAYKEVVQ…LNNRCIRTNI (271 aa).

Belongs to the alpha-carbonic anhydrase family.

Does not have a catalytic activity. The chain is Carbonic anhydrase-related protein 10 (CA10) from Macaca fascicularis (Crab-eating macaque).